Reading from the N-terminus, the 347-residue chain is Fructose-1,6-bisphosphatase (347 aa).

Residues 19–23 (ILQEQ) and 44–48 (SGELS) contribute to the AMP site. D85 and E114 together coordinate Mg(2+). An AMP-binding site is contributed by 127-128 (SY). Residues D133, I135, and D136 each coordinate Mg(2+). Substrate is bound at residue 136 to 139 (DGSS). K155 contributes to the AMP binding site. Residues 227–230 (NEGY), 258–263 (RYIGSM), Y279, and 288–290 (KLR) contribute to the substrate site. E294 is a binding site for Mg(2+).

Belongs to the FBPase class 1 family. In terms of assembly, homotetramer. The cofactor is Mg(2+).

It catalyses the reaction beta-D-fructose 1,6-bisphosphate + H2O = beta-D-fructose 6-phosphate + phosphate. It functions in the pathway carbohydrate biosynthesis; gluconeogenesis. With respect to regulation, subject to complex allosteric regulation. The enzyme can assume an active R-state, or an inactive T-state. Intermediate conformations may exist. AMP acts as allosteric inhibitor. AMP binding affects the turnover of bound substrate and not the affinity for substrate. This Schizosaccharomyces pombe (strain 972 / ATCC 24843) (Fission yeast) protein is Fructose-1,6-bisphosphatase (fbp1).